The primary structure comprises 71 residues: 8.6 kDa protein (71 aa).

The chain is 8.6 kDa protein from Pseudomonas phage Pf1 (Bacteriophage Pf1).